The following is a 147-amino-acid chain: Hemoglobin subunit beta (147 aa).

N-acetylvaline is present on V2. The region spanning 3-147 (HLTGEEKAAV…VANALAHKYH (145 aa)) is the Globin domain. The residue at position 13 (T13) is a Phosphothreonine. At S45 the chain carries Phosphoserine. K60 is subject to N6-acetyllysine. A heme b-binding site is contributed by H64. K83 bears the N6-acetyllysine mark. H93 is a binding site for heme b. C94 is modified (S-nitrosocysteine). N6-acetyllysine is present on K145.

This sequence belongs to the globin family. In terms of assembly, heterotetramer of two alpha chains and two beta chains. As to expression, red blood cells.

Functionally, involved in oxygen transport from the lung to the various peripheral tissues. The sequence is that of Hemoglobin subunit beta (HBB) from Ateles belzebuth (White-bellied spider monkey).